Here is a 270-residue protein sequence, read N- to C-terminus: Short chain dehydrogenase/reductase dpfgG (270 aa).

7 residues coordinate NADP(+): Ile-18, Asp-69, Asn-96, Lys-130, Lys-171, Ile-200, and Asn-204. Lys-171 serves as the catalytic Lowers pKa of active site Tyr.

It belongs to the short-chain dehydrogenases/reductases (SDR) family.

It functions in the pathway secondary metabolite biosynthesis; terpenoid biosynthesis. Functionally, short chain dehydrogenase/reductase; part of the gene cluster that mediates the biosynthesis of diterpenoid pyrones. The first step of the pathway is the synthesis of the alpha-pyrone moiety by the polyketide synthase dpfgA via condensation of one acetyl-CoA starter unit with 3 malonyl-CoA units and 2 methylations. The alpha-pyrone is then combined with geranylgeranyl pyrophosphate (GGPP) formed by the GGPP synthase dpfgD through the action of the prenyltransferase dpfgC to yield a linear alpha-pyrone diterpenoid. Subsequent steps in the diterpenoid pyrone biosynthetic pathway involve the decalin core formation, which is initiated by the epoxidation of the C10-C11 olefin by the FAD-dependent oxidoreductase dpfgE, and is followed by a cyclization cascade catalyzed by the terpene cyclase dpfgB. The short chain dehydrogenase/reductase dpfgG then oxidizes the 8S hydroxy group to a ketone and the short chain dehydrogenase/reductase dpfgH reduces the ketone to the 8R hydroxy group to yield higginsianin B. Higginsianin B is further methylated by the methyltransferase dpfgI to produce the intermediate named FDDP B. The cytochrome P450 monooxygenase dfgpJ then catalyzes a three-step oxidation at C-27 to generate a carboxylic acid as well as C-26 hydroxylation. Finally, methyltransferase dpfgK methylates the carboxylic acid generated by dpfgJ, yielding the final diterpenoid pyrones from the pathway which were named FDDP D and FDDP E. The protein is Short chain dehydrogenase/reductase dpfgG of Gibberella zeae (strain ATCC MYA-4620 / CBS 123657 / FGSC 9075 / NRRL 31084 / PH-1) (Wheat head blight fungus).